A 109-amino-acid polypeptide reads, in one-letter code: uncharacterized protein (109 aa).

Positions 1–28 (MNMLAYFLYCRQLLLAVVLIEFPPRLCG) are cleaved as a signal peptide.

This is an uncharacterized protein from Homo sapiens (Human).